The sequence spans 394 residues: Elongation factor Tu (394 aa).

The 195-residue stretch at 10–204 (KPHINIGTIG…AVDDNIPTPE (195 aa)) folds into the tr-type G domain. The G1 stretch occupies residues 19–26 (GHVDHGKT). 19 to 26 (GHVDHGKT) contributes to the GTP binding site. Thr26 contacts Mg(2+). The G2 stretch occupies residues 60–64 (GITIN). The G3 stretch occupies residues 81 to 84 (DCPG). GTP is bound by residues 81–85 (DCPGH) and 136–139 (NKVD). The G4 stretch occupies residues 136–139 (NKVD). The tract at residues 174 to 176 (SAL) is G5.

Belongs to the TRAFAC class translation factor GTPase superfamily. Classic translation factor GTPase family. EF-Tu/EF-1A subfamily. Monomer.

The protein localises to the cytoplasm. The catalysed reaction is GTP + H2O = GDP + phosphate + H(+). In terms of biological role, GTP hydrolase that promotes the GTP-dependent binding of aminoacyl-tRNA to the A-site of ribosomes during protein biosynthesis. This chain is Elongation factor Tu, found in Chlamydia pneumoniae (Chlamydophila pneumoniae).